Here is a 257-residue protein sequence, read N- to C-terminus: MNVLLTNDDGIRAKGLRALYAALREAGHTVYVVAPMSQQSGVGHSLTVFEPVRATVIEEPDFTGTGVYGTPTDCVKLALGRLLPHKPDLVMSGINAGANVGPDILYSGTVGAATEAAHEELPSMAVSFDSFSHNTAPDMDLMPQARHAVNLAERMNWSAVGRRRVININYPACPLDEAQDLRVCPQTSAVWKNVYIEREDPRGAPYWWLEGEIPPASIEPGSDKDLLNRGHITLTPLCFDFTDHEGLTALKCMKLQG.

Residues aspartate 8, aspartate 9, serine 40, and asparagine 95 each coordinate a divalent metal cation.

Belongs to the SurE nucleotidase family. It depends on a divalent metal cation as a cofactor.

It localises to the cytoplasm. It catalyses the reaction a ribonucleoside 5'-phosphate + H2O = a ribonucleoside + phosphate. In terms of biological role, nucleotidase that shows phosphatase activity on nucleoside 5'-monophosphates. This is 5'-nucleotidase SurE from Desulfovibrio desulfuricans (strain ATCC 27774 / DSM 6949 / MB).